The primary structure comprises 265 residues: Non-seed lectin (265 aa).

Residues 1–21 constitute a signal peptide (or 23); it reads MALYRTKELVSLVSIMFVLLA. Residues asparagine 59 and asparagine 127 are each glycosylated (N-linked (GlcNAc...) asparagine).

Belongs to the leguminous lectin family. In terms of assembly, monomer. Most highly expressed in the epidermal layer of developing shoot tips.

This is Non-seed lectin from Pisum sativum (Garden pea).